The sequence spans 519 residues: Aspartokinase (519 aa).

Ser-326 carries the phosphoserine modification. At Thr-328 the chain carries Phosphothreonine. An ACT domain is found at 436–518 (LVGKHMRNTT…MLVEKPWLYS (83 aa)).

This sequence belongs to the aspartokinase family.

The catalysed reaction is L-aspartate + ATP = 4-phospho-L-aspartate + ADP. Its pathway is amino-acid biosynthesis; L-methionine biosynthesis via de novo pathway; L-homoserine from L-aspartate: step 1/3. It participates in amino-acid biosynthesis; L-threonine biosynthesis; L-threonine from L-aspartate: step 1/5. Its function is as follows. Phosphorylates aspartate, the first step in the biosynthesis of amino acids that derive from aspartate (the aspartate family of amino acids), including methioinine and threonine, the latter of which is a precursor to isoleucine. In Schizosaccharomyces pombe (strain 972 / ATCC 24843) (Fission yeast), this protein is Aspartokinase.